We begin with the raw amino-acid sequence, 629 residues long: Forkhead box protein O (629 aa).

Thr49 carries the phosphothreonine; by PKB/AKT1 modification. Ser78 is subject to Phosphoserine. A DNA-binding region (fork-head) is located at residues Trp98 to Gly204. Disordered regions lie at residues Lys185–Lys208, Gly220–Arg274, Gln321–Gln368, Ser394–Asn417, and Gln563–Leu597. A Phosphoserine; by PKB/AKT1 modification is found at Ser193. 2 stretches are compositionally biased toward polar residues: residues Ala224–Ser233 and Arg259–Gly268. Ser262 bears the Phosphoserine; by PKB/AKT1 mark. 3 positions are modified to phosphoserine: Ser265, Ser266, and Ser271. A compositionally biased stretch (pro residues) spans Ser332–Pro341. Low complexity predominate over residues Pro342–Leu356. The span at Ser394 to Ser403 shows a compositional bias: polar residues.

Interacts with melt.

The protein localises to the cytoplasm. Its subcellular location is the nucleus. In terms of biological role, transcription factor involved in the regulation of the insulin signaling pathway. Consistently activates both the downstream target Thor\d4EBP and the feedback control target InR. Involved in negative regulation of the cell cycle, modulating cell growth and proliferation. In response to cellular stresses, such as nutrient deprivation or increased levels of reactive oxygen species, foxo is activated and inhibits growth through the action of target genes such as Thor. Foxo activated in the adult fat body can regulate lifespan in adults; an insulin peptide itself may function as one secondary messenger of insulin-regulated aging. Also regulates Lip4, homolog of human acid lipases, thereby acting as a key modulator of lipid metabolism by insulin signaling and integrates insulin responses to glucose and lipid homeostasis. This Drosophila persimilis (Fruit fly) protein is Forkhead box protein O.